Reading from the N-terminus, the 141-residue chain is Nucleoside diphosphate kinase (141 aa).

ATP is bound by residues lysine 11, phenylalanine 59, arginine 87, threonine 93, arginine 104, and asparagine 114. The active-site Pros-phosphohistidine intermediate is the histidine 117.

This sequence belongs to the NDK family. Homotetramer. The cofactor is Mg(2+).

The protein localises to the cytoplasm. The catalysed reaction is a 2'-deoxyribonucleoside 5'-diphosphate + ATP = a 2'-deoxyribonucleoside 5'-triphosphate + ADP. It catalyses the reaction a ribonucleoside 5'-diphosphate + ATP = a ribonucleoside 5'-triphosphate + ADP. Major role in the synthesis of nucleoside triphosphates other than ATP. The ATP gamma phosphate is transferred to the NDP beta phosphate via a ping-pong mechanism, using a phosphorylated active-site intermediate. This chain is Nucleoside diphosphate kinase, found in Ralstonia nicotianae (strain ATCC BAA-1114 / GMI1000) (Ralstonia solanacearum).